The chain runs to 310 residues: MSEQQTVSQKEQYNLNKLQKRLRRNVGQAIADFNMIEEGDRIMVCLSGGKDSYTMLEILRNLQQSAPVNFSLVAVNLDQKQPGFPEHILPAYLESLGVEYQIVEENTYSIVKDKIPEGKTTCSLCSRLRRGILYRTATELGATKIALGHHRDDILQTLFLNMFYGGKLKGMPPKLMSDDGKHVVIRPLAYCREKDIERFSVAKGFPIIPCNLCGSQPNLQRQVIGDMLRDWDKRYPGRLETMFSAMQNVVPSHLSDYNLFDFKGIHHGSEVVDGGDLAFDREDIPMQPIGWQPEDADDAAPVRLDVLEIK.

Residues 47 to 52 (SGGKDS) carry the PP-loop motif motif. Residues C122, C125, and C213 each coordinate [4Fe-4S] cluster.

The protein belongs to the TtcA family. Homodimer. Mg(2+) serves as cofactor. The cofactor is [4Fe-4S] cluster.

The protein localises to the cytoplasm. The catalysed reaction is cytidine(32) in tRNA + S-sulfanyl-L-cysteinyl-[cysteine desulfurase] + AH2 + ATP = 2-thiocytidine(32) in tRNA + L-cysteinyl-[cysteine desulfurase] + A + AMP + diphosphate + H(+). It participates in tRNA modification. In terms of biological role, catalyzes the ATP-dependent 2-thiolation of cytidine in position 32 of tRNA, to form 2-thiocytidine (s(2)C32). The sulfur atoms are provided by the cysteine/cysteine desulfurase (IscS) system. The protein is tRNA-cytidine(32) 2-sulfurtransferase of Serratia proteamaculans (strain 568).